The primary structure comprises 362 residues: Phosphoserine aminotransferase (362 aa).

2 residues coordinate L-glutamate: Ser9 and Arg42. Residues 76-77 (GR), Trp102, Thr153, Asp174, and Gln197 contribute to the pyridoxal 5'-phosphate site. The residue at position 198 (Lys198) is an N6-(pyridoxal phosphate)lysine. 239–240 (NT) serves as a coordination point for pyridoxal 5'-phosphate.

This sequence belongs to the class-V pyridoxal-phosphate-dependent aminotransferase family. SerC subfamily. Homodimer. Requires pyridoxal 5'-phosphate as cofactor.

The protein localises to the cytoplasm. The enzyme catalyses O-phospho-L-serine + 2-oxoglutarate = 3-phosphooxypyruvate + L-glutamate. It catalyses the reaction 4-(phosphooxy)-L-threonine + 2-oxoglutarate = (R)-3-hydroxy-2-oxo-4-phosphooxybutanoate + L-glutamate. Its pathway is amino-acid biosynthesis; L-serine biosynthesis; L-serine from 3-phospho-D-glycerate: step 2/3. It participates in cofactor biosynthesis; pyridoxine 5'-phosphate biosynthesis; pyridoxine 5'-phosphate from D-erythrose 4-phosphate: step 3/5. Its function is as follows. Catalyzes the reversible conversion of 3-phosphohydroxypyruvate to phosphoserine and of 3-hydroxy-2-oxo-4-phosphonooxybutanoate to phosphohydroxythreonine. This Escherichia coli O1:K1 / APEC protein is Phosphoserine aminotransferase.